A 269-amino-acid polypeptide reads, in one-letter code: Eukaryotic translation initiation factor 3 subunit G-1 (269 aa).

One can recognise an RRM domain in the interval 188 to 266 (AAIRISNLSE…LILSVEWSKP (79 aa)).

Belongs to the eIF-3 subunit G family. Component of the eukaryotic translation initiation factor 3 (eIF-3) complex. The eIF-3 complex interacts with pix.

The protein localises to the cytoplasm. Its function is as follows. RNA-binding component of the eukaryotic translation initiation factor 3 (eIF-3) complex, which is involved in protein synthesis of a specialized repertoire of mRNAs and, together with other initiation factors, stimulates binding of mRNA and methionyl-tRNAi to the 40S ribosome. The eIF-3 complex specifically targets and initiates translation of a subset of mRNAs involved in cell proliferation. This subunit can bind 18S rRNA. This chain is Eukaryotic translation initiation factor 3 subunit G-1, found in Drosophila persimilis (Fruit fly).